We begin with the raw amino-acid sequence, 150 residues long: Protein-arginine-phosphatase (150 aa).

Cys-7 serves as the catalytic Nucleophile. Position 8–13 (8–13) interacts with substrate; the sequence is TGNTCR. Arg-13 is a catalytic residue. Asp-118 functions as the Proton donor/acceptor in the catalytic mechanism.

It belongs to the low molecular weight phosphotyrosine protein phosphatase family.

The enzyme catalyses N(omega)-phospho-L-arginyl-[protein] + H2O = L-arginyl-[protein] + phosphate. Its activity is regulated as follows. Efficiently inhibited by Cu(2+) ion, Zn(2+) ion, sodium pyrophosphate and N-ethylmaleimide, while the addition of Mg(2+), Ca(2+) or Fe(3+) ions has minimal effect. Inhibited in a competitive manner by vanadate. Functionally, catalyzes the specific dephosphorylation of phosphoarginine residues in a large number of proteins. Counteracts the protein arginine kinase McsB in vivo. Can dephosphorylate CtsR-P; thus, can restore the DNA-binding ability of the CtsR repressor by reversing the McsB-mediated phosphorylation. Is the only active pArg phosphatase present in B.subtilis. Exhibits almost no activity against pSer, pThr, or pTyr peptides. Appears to play a role in B.subtilis stress resistance. Protein arginine phosphorylation has a physiologically important role and is involved in the regulation of many critical cellular processes, such as protein homeostasis, motility, competence, and stringent and stress responses, by regulating gene expression and protein activity. The polypeptide is Protein-arginine-phosphatase (ywlE) (Bacillus subtilis (strain 168)).